Reading from the N-terminus, the 138-residue chain is Putative pre-16S rRNA nuclease (138 aa).

It belongs to the YqgF nuclease family.

It localises to the cytoplasm. Functionally, could be a nuclease involved in processing of the 5'-end of pre-16S rRNA. The chain is Putative pre-16S rRNA nuclease from Fusobacterium nucleatum subsp. nucleatum (strain ATCC 25586 / DSM 15643 / BCRC 10681 / CIP 101130 / JCM 8532 / KCTC 2640 / LMG 13131 / VPI 4355).